The sequence spans 550 residues: Transcription factor 7-like 1-D (550 aa).

The interaction with CTNNB1-A stretch occupies residues methionine 1 to serine 61. Disordered stretches follow at residues methionine 1–arginine 77, glycine 182–proline 212, tryptophan 390–threonine 473, and alanine 488–isoleucine 514. Composition is skewed to basic and acidic residues over residues glutamate 17 to proline 32 and serine 52 to arginine 77. The interval leucine 109–valine 311 is interaction with AES and TLE4-A. The HMG box DNA-binding region spans isoleucine 323 to serine 391. Over residues lysine 406–threonine 415 the composition is skewed to basic and acidic residues. The tract at residues glutamine 407 to aspartate 550 is interaction with CTBP-B. Positions serine 444–proline 455 are enriched in low complexity.

It belongs to the TCF/LEF family. Interacts with csnk1e, ctnnb1-A, ctbp-B, dact1-A and gsk3b. May interact with ase and tle4-A. Phosphorylated. Phosphorylation by csnk1e promotes binding to ctnnb1-A while phosphorylation by gsk3b may reverse this effect.

It is found in the nucleus. In terms of biological role, participates in the Wnt signaling pathway. Binds to DNA and acts as a repressor in the absence of ctnnb1-A and possibly ctnnb1-B, and as an activator in the presence of these proteins. Required early in development for the establishment of the dorsal body axis in response to maternal Wnt signaling. The sequence is that of Transcription factor 7-like 1-D (tcf7l1-d) from Xenopus laevis (African clawed frog).